Reading from the N-terminus, the 1093-residue chain is Small G protein signaling modulator 1 (1093 aa).

The 155-residue stretch at 36-190 (HEDSSHIISF…EYTKMKTADH (155 aa)) folds into the RUN domain. Residues 256-297 (LLYGKNNVLVQPRDDMEAVPGYLSLHQTADVMTLKWTPNQLM) form an important for interaction with RAB9A and RAB9B region. Positions 301–350 (VGDLDYEKSVYWDYAVTIRLEEIVYLHCHQQVDSGGTVVLVSQDGIQRPP) are required for interaction with RAP family members. 3 disordered regions span residues 377-412 (DPPL…KEDD), 645-778 (DSTI…ELAV), and 810-838 (DGAV…EEPE). The span at 385-397 (GKGKVFPKLRKRS) shows a compositional bias: basic residues. Positions 562-1026 (GVQPEIRRAV…SVWETIWAAK (465 aa)) constitute a Rab-GAP TBC domain. Residues 647 to 676 (TISNESSQSCSSGRQNLRLQSDSSSSTQVF) show a composition bias toward polar residues. Residues 687–696 (AEGRSEEKHP) are compositionally biased toward basic and acidic residues. Polar residues predominate over residues 702 to 736 (NPANGTCSPDSGHPSSHNFSSGLSEHSEPSLSTED). Basic and acidic residues-rich tracts occupy residues 766 to 776 (TSRDEAPREEL) and 820 to 829 (EADKPSRADS).

This sequence belongs to the RUTBC family. In terms of assembly, interacts with RAB9A (GTP-bound form) and RAB9B. Interacts with RAB3A, RAB4A, RAB5A, RAB8A, RAB11A, RAP1A, RAP1B, RAP2A and RAP2B. No interaction with RAB27A. As to expression, expressed only in brain.

It localises to the golgi apparatus. Its subcellular location is the trans-Golgi network. It is found in the cytoplasm. The protein localises to the cytoplasmic vesicle membrane. In terms of biological role, interacts with numerous Rab family members, functioning as Rab effector for some, and as GTPase activator for others. Promotes GTP hydrolysis by RAB34 and RAB36. Probably functions as a GTPase effector with RAB9A and RAB9B; does not stimulate GTP hydrolysis with RAB9A and RAB9B. The sequence is that of Small G protein signaling modulator 1 (Sgsm1) from Mus musculus (Mouse).